Consider the following 361-residue polypeptide: Biotin synthase (361 aa).

The Radical SAM core domain occupies 47–278 (VHGDEVALCG…AAHIFVMGGR (232 aa)). The [4Fe-4S] cluster site is built by cysteine 65, cysteine 69, and cysteine 72. [2Fe-2S] cluster contacts are provided by serine 110, cysteine 143, and cysteine 203. The interval 323–361 (TLRPPDTGKPWAFDGHAPSDADWNRKAAEPRPRPLPVVR) is disordered. Positions 339 to 354 (APSDADWNRKAAEPRP) are enriched in basic and acidic residues.

This sequence belongs to the radical SAM superfamily. Biotin synthase family. As to quaternary structure, homodimer. It depends on [4Fe-4S] cluster as a cofactor. [2Fe-2S] cluster serves as cofactor.

The enzyme catalyses (4R,5S)-dethiobiotin + (sulfur carrier)-SH + 2 reduced [2Fe-2S]-[ferredoxin] + 2 S-adenosyl-L-methionine = (sulfur carrier)-H + biotin + 2 5'-deoxyadenosine + 2 L-methionine + 2 oxidized [2Fe-2S]-[ferredoxin]. Its pathway is cofactor biosynthesis; biotin biosynthesis; biotin from 7,8-diaminononanoate: step 2/2. In terms of biological role, catalyzes the conversion of dethiobiotin (DTB) to biotin by the insertion of a sulfur atom into dethiobiotin via a radical-based mechanism. The protein is Biotin synthase of Anaeromyxobacter sp. (strain K).